The chain runs to 343 residues: Dihydroorotase (343 aa).

Zn(2+) is bound by residues histidine 13 and histidine 15. Substrate-binding positions include 15-17 and asparagine 41; that span reads HLR. Zn(2+)-binding residues include lysine 99, histidine 136, and histidine 174. An N6-carboxylysine modification is found at lysine 99. A substrate-binding site is contributed by histidine 136. A substrate-binding site is contributed by leucine 219. A Zn(2+)-binding site is contributed by aspartate 247. The active site involves aspartate 247. Residues histidine 251 and alanine 263 each contribute to the substrate site.

It belongs to the metallo-dependent hydrolases superfamily. DHOase family. Class II DHOase subfamily. In terms of assembly, homodimer. Requires Zn(2+) as cofactor.

It carries out the reaction (S)-dihydroorotate + H2O = N-carbamoyl-L-aspartate + H(+). Its pathway is pyrimidine metabolism; UMP biosynthesis via de novo pathway; (S)-dihydroorotate from bicarbonate: step 3/3. Its function is as follows. Catalyzes the reversible cyclization of carbamoyl aspartate to dihydroorotate. This is Dihydroorotase from Shewanella putrefaciens (strain CN-32 / ATCC BAA-453).